A 197-amino-acid polypeptide reads, in one-letter code: Small ribosomal subunit protein uS4y (197 aa).

Residues 109-183 (RRLQTIVFKS…VKRRNERAGA (75 aa)) enclose the S4 RNA-binding domain. Residues 161–197 (SLTSPFGGGRPGRVKRRNERAGAKKASGGDGDEDDEE) form a disordered region.

This sequence belongs to the universal ribosomal protein uS4 family. Binds to the translation initiation factors TIF3E1.

This chain is Small ribosomal subunit protein uS4y (RPS9C), found in Arabidopsis thaliana (Mouse-ear cress).